A 463-amino-acid polypeptide reads, in one-letter code: L-seryl-tRNA(Sec) selenium transferase (463 aa).

N6-(pyridoxal phosphate)lysine is present on Lys295.

This sequence belongs to the SelA family. As to quaternary structure, homodecamer; pentamer of dimers. Binds only one seryl-tRNA(Sec) per dimer. Requires pyridoxal 5'-phosphate as cofactor.

It localises to the cytoplasm. The enzyme catalyses L-seryl-tRNA(Sec) + selenophosphate + H(+) = L-selenocysteinyl-tRNA(Sec) + phosphate. Its pathway is aminoacyl-tRNA biosynthesis; selenocysteinyl-tRNA(Sec) biosynthesis; selenocysteinyl-tRNA(Sec) from L-seryl-tRNA(Sec) (bacterial route): step 1/1. Converts seryl-tRNA(Sec) to selenocysteinyl-tRNA(Sec) required for selenoprotein biosynthesis. This chain is L-seryl-tRNA(Sec) selenium transferase, found in Escherichia coli O81 (strain ED1a).